The chain runs to 126 residues: Large ribosomal subunit protein bL12 (126 aa).

Positions 107–116 (EDAEKAKSQL) are enriched in basic and acidic residues. A disordered region spans residues 107-126 (EDAEKAKSQLEEAGATVELK).

This sequence belongs to the bacterial ribosomal protein bL12 family. Homodimer. Part of the ribosomal stalk of the 50S ribosomal subunit. Forms a multimeric L10(L12)X complex, where L10 forms an elongated spine to which 2 to 4 L12 dimers bind in a sequential fashion. Binds GTP-bound translation factors.

Functionally, forms part of the ribosomal stalk which helps the ribosome interact with GTP-bound translation factors. Is thus essential for accurate translation. The protein is Large ribosomal subunit protein bL12 of Bifidobacterium adolescentis (strain ATCC 15703 / DSM 20083 / NCTC 11814 / E194a).